The following is an 830-amino-acid chain: MDVSYNWLNEYVDHDWSPKELAERLTMAGLEVETVRPLGQSLDGVVVGKVTAVREHPNADRLVLCDVDLGDGAPSQIACGAPNVAAGQKVPVATVGTTLSRPDPDDPEALQELTVEARELRGEASNGMICAEDELGLSDDHAGIMVLDDDTPVGTPFPEYLDAHGMPSTDAVLDIELTPNRPDAASHLGVARDVSALADSELRTPTVDTPSPGGPVAEEITVDLRDEAGCPRYVALLVRGVDVTESPLWLRRRLTAIGLQPRNHVVDVTNFVLHECGQPLHAFDLDAIADDTIVVRRTDDETPFTTLDGEERDLPEDTLLICDAEAPVAVAGVMGGANSEVSADTTDVLIESAYFDPSTIRRTAKALDLQTDSSYRFERGVDRDGQVWAAARAAELIAKLGGGTVVPGLVDEHPSPPAEKTIALRPDRLTQVLGTEVPTDEGTRLLGAIGFDVEAGEDALHCTVPTWRPDVSIEEDLIEEVARLHGYDQIPEPERVPVPSRTPEQPPEETLERQARQLLKGLGYREIYTNSMLRTDRAERFNVPPAGSDRAPVVETKNPISEEMAALRPRLLPGALEVMQHNRNHGQEALRVFEFGRVFRRAAEPDDPIVPGYSEHPALLVALSGPHAPTGWDTEPRSADIFDLKGTVETLLDDLRVPALQVRPRDAGATDEAPPVTQHHIDVAAGDTPLGTVARVRDDVAADFDLDTPVFVAEFHWAALVDSATAEQHRDYEPVSRFPVVDRDLAVLVPADQPVGPLQRAIREAGAPLLRRVDVFDTYAGEGIDEDTKSVAFTLRFGADRTLTDEEVDARLDAIVERLAENHGARLRQQ.

Residues 39-158 enclose the tRNA-binding domain; sequence GQSLDGVVVG…DDTPVGTPFP (120 aa). Positions 417–492 constitute a B5 domain; sequence PAEKTIALRP…RLHGYDQIPE (76 aa). Mg(2+)-binding residues include Asp470, Asp476, Glu479, and Glu480. Residues 490 to 510 form a disordered region; the sequence is IPEPERVPVPSRTPEQPPEET. The 93-residue stretch at 736–828 folds into the FDX-ACB domain; sequence SRFPVVDRDL…LAENHGARLR (93 aa).

The protein belongs to the phenylalanyl-tRNA synthetase beta subunit family. Type 1 subfamily. In terms of assembly, tetramer of two alpha and two beta subunits. Mg(2+) is required as a cofactor.

It localises to the cytoplasm. The enzyme catalyses tRNA(Phe) + L-phenylalanine + ATP = L-phenylalanyl-tRNA(Phe) + AMP + diphosphate + H(+). This is Phenylalanine--tRNA ligase beta subunit from Salinibacter ruber (strain DSM 13855 / M31).